A 380-amino-acid polypeptide reads, in one-letter code: 1-deoxy-D-xylulose 5-phosphate reductoisomerase (380 aa).

Positions 10, 11, 12, 13, 36, 37, 38, and 120 each coordinate NADPH. A 1-deoxy-D-xylulose 5-phosphate-binding site is contributed by Lys121. Position 122 (Glu122) interacts with NADPH. Residue Asp146 participates in Mn(2+) binding. 1-deoxy-D-xylulose 5-phosphate is bound by residues Ser147, Glu148, Ser172, and His195. Glu148 is a Mn(2+) binding site. An NADPH-binding site is contributed by Gly201. Ser208, Asn213, Lys214, and Glu217 together coordinate 1-deoxy-D-xylulose 5-phosphate. Glu217 is a Mn(2+) binding site.

It belongs to the DXR family. It depends on Mg(2+) as a cofactor. The cofactor is Mn(2+).

It carries out the reaction 2-C-methyl-D-erythritol 4-phosphate + NADP(+) = 1-deoxy-D-xylulose 5-phosphate + NADPH + H(+). It participates in isoprenoid biosynthesis; isopentenyl diphosphate biosynthesis via DXP pathway; isopentenyl diphosphate from 1-deoxy-D-xylulose 5-phosphate: step 1/6. Catalyzes the NADPH-dependent rearrangement and reduction of 1-deoxy-D-xylulose-5-phosphate (DXP) to 2-C-methyl-D-erythritol 4-phosphate (MEP). The sequence is that of 1-deoxy-D-xylulose 5-phosphate reductoisomerase from Bacillus cereus (strain Q1).